Consider the following 70-residue polypeptide: Conotoxin Im23.4 (70 aa).

The signal sequence occupies residues 1–22 (MIMRMTLTLFVLVVMTAASASG). A propeptide spanning residues 23 to 30 (DALTEAKR) is cleaved from the precursor. Disulfide bonds link cysteine 34–cysteine 41, cysteine 45–cysteine 53, and cysteine 54–cysteine 69.

It belongs to the conotoxin K superfamily. In terms of tissue distribution, expressed by the venom duct.

It is found in the secreted. Functionally, probable neurotoxin. This chain is Conotoxin Im23.4, found in Conus imperialis (Imperial cone).